The chain runs to 1529 residues: ABC multidrug transporter AFR2 (1529 aa).

Positions 144 to 394 (GSLRDLIGNR…FVDMGFHCPS (251 aa)) constitute an ABC transporter 1 domain. 2 N-linked (GlcNAc...) asparagine glycosylation sites follow: Asn235 and Asn318. 5 helical membrane-spanning segments follow: residues 510 to 530 (LFGN…LPVT), 539 to 559 (ALLF…ILIL), 589 to 609 (IPYK…MTNL), 614 to 634 (GAYF…SMLF), and 648 to 668 (LAPA…AVNV). Residue Asn742 is glycosylated (N-linked (GlcNAc...) asparagine). A helical membrane pass occupies residues 757–777 (GILIGFFLFFTAIYLTATEFI). The 243-residue stretch at 845-1087 (FSWKDVVYDI…ILIDYFEKNG (243 aa)) folds into the ABC transporter 2 domain. ATP is bound at residue 881 to 888 (GVSGAGKT). 5 helical membrane passes run 1193-1213 (YIWA…FSFF), 1229-1249 (VFMM…NFVT), 1268-1288 (IFIL…GVII), 1314-1334 (LMFL…IMIV), and 1353-1373 (MCLI…FWVF). The N-linked (GlcNAc...) asparagine glycan is linked to Asn1434. The helical transmembrane segment at 1465–1485 (FGLLWVYVVFNVIAAIGIYWL) threads the bilayer. Basic and acidic residues predominate over residues 1493 to 1505 (GKERASEPEDVQE). The tract at residues 1493-1529 (GKERASEPEDVQEKQVPAQSTEKKYQSISRSSESTVA) is disordered. Residues 1518 to 1529 (QSISRSSESTVA) are compositionally biased toward polar residues.

Belongs to the ABC transporter superfamily. ABCG family. PDR (TC 3.A.1.205) subfamily.

Its subcellular location is the cell membrane. It catalyses the reaction itraconazole(in) + ATP + H2O = itraconazole(out) + ADP + phosphate + H(+). It carries out the reaction voriconazole(in) + ATP + H2O = voriconazole(out) + ADP + phosphate + H(+). The catalysed reaction is fluconazole(in) + ATP + H2O = fluconazole(out) + ADP + phosphate + H(+). Pleiotropic ABC efflux transporter that confers resistance to structurally and functionally unrelated compounds including azoles such as fluconazole (FLC), itraconazole (ITC), posaconazole (POS), and voriconazole (VRC). The polypeptide is ABC multidrug transporter AFR2 (Cryptococcus deuterogattii (strain R265) (Cryptococcus gattii VGII (strain R265))).